The chain runs to 375 residues: Outer membrane porin C (375 aa).

The first 21 residues, 1-21 (MKVKVLSLLVPALLVAGAANA), serve as a signal peptide directing secretion. The Periplasmic portion of the chain corresponds to 22 to 33 (AEVYNKDGNKLD). A beta stranded transmembrane segment spans residues 34–42 (LYGKVDGLH). Residues 43–53 (YFSDDKSVDGD) are Extracellular-facing. The chain crosses the membrane as a beta stranded span at residues 54-63 (QTYMRLGFKG). Topologically, residues 64 to 73 (ETQVTDQLTG) are periplasmic. Residues 74-84 (YGQWEYQIQGN) form a beta stranded membrane-spanning segment. The Extracellular segment spans residues 85-91 (APESENN). Residues 92–101 (SWTRVAFAGL) form a beta stranded membrane-spanning segment. At 102 to 106 (KFQDI) the chain is on the periplasmic side. A beta stranded transmembrane segment spans residues 107–115 (GSFDYGRNY). Residues 116–141 (GVVYDVTSWTDVLPEFGGDTYGSDNF) lie on the Extracellular side of the membrane. A beta stranded transmembrane segment spans residues 142 to 154 (MQQRGNGFATYRN). At 155–163 (TDFFGLVDG) the chain is on the periplasmic side. Residues 164 to 171 (LNFAVQYQ) form a beta stranded membrane-spanning segment. The Extracellular segment spans residues 172–204 (GQNGSVSGENDPDFTGHGITNNGRKALRQNGDG). The chain crosses the membrane as a beta stranded span at residues 205–211 (VGGSITY). The Periplasmic portion of the chain corresponds to 212–215 (DYEG). A beta stranded membrane pass occupies residues 216–223 (FGVGAAVS). Over 224 to 245 (SSKRTDAQNTAAYIGNGDRAET) the chain is Extracellular. A beta stranded membrane pass occupies residues 246–252 (YTGGLKY). The Periplasmic portion of the chain corresponds to 253 to 256 (DANN). Residues 257–264 (IYLAAQYT) traverse the membrane as a beta stranded segment. Topologically, residues 265-273 (QTYNATRVG) are extracellular. The chain crosses the membrane as a beta stranded span at residues 274–290 (SLGWANKAQNFEAVAQY). Over 291–295 (QFDFG) the chain is Periplasmic. The chain crosses the membrane as a beta stranded span at residues 296–303 (LRPSVAYL). Residues 304–326 (QSKGKNLGTIGTRNYDDEDILKY) are Extracellular-facing. Residues 327–334 (VDVGATYY) traverse the membrane as a beta stranded segment. The Periplasmic portion of the chain corresponds to 335-338 (FNKN). The chain crosses the membrane as a beta stranded span at residues 339-346 (MSTYVDYK). The Extracellular portion of the chain corresponds to 347–366 (INLLDDNQFTRDAGINTDNI). Residues 367–374 (VALGLVYQ) form a beta stranded membrane-spanning segment. Position 375 (Phe-375) is a topological domain, periplasmic.

The protein belongs to the Gram-negative porin family. As to quaternary structure, homotrimer. Forms mixed heterotrimers with OmpF; other mixed heterotrimers are also probable.

It is found in the cell outer membrane. In terms of biological role, forms pores that allow passive diffusion of small molecules across the outer membrane. (Microbial infection) Supports colicin E5 entry in the absence of its major receptor OmpF. Functionally, (Microbial infection) A mixed OmpC-OmpF heterotrimer is the outer membrane receptor for toxin CdiA-EC536. This Escherichia coli O6:K15:H31 (strain 536 / UPEC) protein is Outer membrane porin C (ompC).